The chain runs to 348 residues: D-alanine--D-alanine ligase (348 aa).

One can recognise an ATP-grasp domain in the interval 132-334 (KRILEVAGVP…YSDLIKELVV (203 aa)). 162-217 (LEKLTFPVFVKPANMGSSVGISKAENESELRSAIDLALKYDSRILIEQGVVAREIE) provides a ligand contact to ATP. The Mg(2+) site is built by Asp288, Glu301, and Asn303.

The protein belongs to the D-alanine--D-alanine ligase family. The cofactor is Mg(2+). It depends on Mn(2+) as a cofactor.

The protein localises to the cytoplasm. The enzyme catalyses 2 D-alanine + ATP = D-alanyl-D-alanine + ADP + phosphate + H(+). Its pathway is cell wall biogenesis; peptidoglycan biosynthesis. In terms of biological role, cell wall formation. This Streptococcus thermophilus (strain ATCC BAA-250 / LMG 18311) protein is D-alanine--D-alanine ligase.